The chain runs to 53 residues: Sodium/potassium-transporting ATPase subunit gamma (53 aa).

A helical membrane pass occupies residues 16 to 34 (GGLIFAALAFIVGLVIILS).

Belongs to the FXYD family. As to quaternary structure, regulatory subunit of the sodium/potassium-transporting ATPase which is composed of a catalytic alpha subunit, an auxiliary non-catalytic beta subunit and an additional regulatory subunit. The N-terminus is blocked. Highest levels expressed in the kidney and spleen. Restricted to the basolateral membrane in renal epithelial cells and varies in its level of expression along the nephron.

The protein resides in the membrane. May be involved in forming the receptor site for cardiac glycoside binding or may modulate the transport function of the sodium ATPase. This chain is Sodium/potassium-transporting ATPase subunit gamma (FXYD2), found in Ovis aries (Sheep).